We begin with the raw amino-acid sequence, 252 residues long: Imidazole glycerol phosphate synthase subunit HisF (252 aa).

Active-site residues include Asp11 and Asp130.

Belongs to the HisA/HisF family. As to quaternary structure, heterodimer of HisH and HisF.

It localises to the cytoplasm. It catalyses the reaction 5-[(5-phospho-1-deoxy-D-ribulos-1-ylimino)methylamino]-1-(5-phospho-beta-D-ribosyl)imidazole-4-carboxamide + L-glutamine = D-erythro-1-(imidazol-4-yl)glycerol 3-phosphate + 5-amino-1-(5-phospho-beta-D-ribosyl)imidazole-4-carboxamide + L-glutamate + H(+). It functions in the pathway amino-acid biosynthesis; L-histidine biosynthesis; L-histidine from 5-phospho-alpha-D-ribose 1-diphosphate: step 5/9. In terms of biological role, IGPS catalyzes the conversion of PRFAR and glutamine to IGP, AICAR and glutamate. The HisF subunit catalyzes the cyclization activity that produces IGP and AICAR from PRFAR using the ammonia provided by the HisH subunit. The protein is Imidazole glycerol phosphate synthase subunit HisF of Lacticaseibacillus paracasei (strain ATCC 334 / BCRC 17002 / CCUG 31169 / CIP 107868 / KCTC 3260 / NRRL B-441) (Lactobacillus paracasei).